Reading from the N-terminus, the 760-residue chain is Phosphatidylinositol N-acetylglucosaminyltransferase subunit Q (760 aa).

Transmembrane regions (helical) follow at residues 278–298, 349–371, 378–400, 446–468, and 475–497; these read TVAS…WLHG, LYHI…HILW, CLGL…FHIY, LFIG…LYYL, and LLVV…LPLY. Residues 696-748 are disordered; the sequence is LAVGVEGPCQDEPPSPRHPLAPSAEQHPASGGLKQSLTPVPSGPGPSLPEPHG.

Belongs to the PIGQ family. Component of the glycosylphosphatidylinositol-N-acetylglucosaminyltransferase (GPI-GnT) complex composed at least by PIGA, PIGC, PIGH, PIGP, PIGQ, PIGY and DPM2. Interacts with PIGA, PIGH and PIGC.

It localises to the membrane. Its pathway is glycolipid biosynthesis; glycosylphosphatidylinositol-anchor biosynthesis. Functionally, part of the glycosylphosphatidylinositol-N-acetylglucosaminyltransferase (GPI-GnT) complex that catalyzes the transfer of N-acetylglucosamine from UDP-N-acetylglucosamine to phosphatidylinositol and participates in the first step of GPI biosynthesis. The sequence is that of Phosphatidylinositol N-acetylglucosaminyltransferase subunit Q from Homo sapiens (Human).